The primary structure comprises 425 residues: RNA polymerase sigma factor SigA (425 aa).

The interval 193–263 (MVQSNLRLVV…TRAIADQSRT (71 aa)) is sigma-70 factor domain-2. The Interaction with polymerase core subunit RpoC signature appears at 217–220 (DLIQ). A sigma-70 factor domain-3 region spans residues 272 to 347 (ETISRIKKTT…EADGETPEDE (76 aa)). Positions 360–413 (VLDTLSPRERDVLRLRYGLDDGRMKTLEEIGQIFNVTRERIRQIEAKALRKLRH) are sigma-70 factor domain-4. A DNA-binding region (H-T-H motif) is located at residues 386–405 (LEEIGQIFNVTRERIRQIEA).

It belongs to the sigma-70 factor family. RpoD/SigA subfamily. Interacts transiently with the RNA polymerase catalytic core.

The protein resides in the cytoplasm. Its function is as follows. Sigma factors are initiation factors that promote the attachment of RNA polymerase to specific initiation sites and are then released. This sigma factor is the primary sigma factor during exponential growth. The chain is RNA polymerase sigma factor SigA from Synechocystis sp. (strain ATCC 27184 / PCC 6803 / Kazusa).